The primary structure comprises 336 residues: Aspartate--ammonia ligase (336 aa).

It belongs to the class-II aminoacyl-tRNA synthetase family. AsnA subfamily.

Its subcellular location is the cytoplasm. The catalysed reaction is L-aspartate + NH4(+) + ATP = L-asparagine + AMP + diphosphate + H(+). Its pathway is amino-acid biosynthesis; L-asparagine biosynthesis; L-asparagine from L-aspartate (ammonia route): step 1/1. In Lactobacillus acidophilus (strain ATCC 700396 / NCK56 / N2 / NCFM), this protein is Aspartate--ammonia ligase.